A 202-amino-acid chain; its full sequence is Putative 5'(3')-deoxyribonucleotidase (202 aa).

D22 serves as the catalytic Nucleophile. Residues D22, D24, and D156 each coordinate Mg(2+). D24 serves as the catalytic Proton donor.

The protein belongs to the 5'(3')-deoxyribonucleotidase family. Mg(2+) serves as cofactor.

Its function is as follows. Dephosphorylates the 5' and 2'(3')-phosphates of deoxyribonucleotides. In Chlorobaculum tepidum (strain ATCC 49652 / DSM 12025 / NBRC 103806 / TLS) (Chlorobium tepidum), this protein is Putative 5'(3')-deoxyribonucleotidase.